Reading from the N-terminus, the 103-residue chain is Leukocyte cysteine proteinase inhibitor 1 (103 aa).

Met1 is modified (blocked amino end (Met); partial). Positions 1 to 20 (MESEEMLAGGLTEPRPATPE) are disordered. The Secondary area of contact motif lies at 51 to 55 (QVVAG).

Belongs to the cystatin family.

The protein resides in the cytoplasm. Functionally, potent inhibitor of cathepsins L and S, and papain. This Sus scrofa (Pig) protein is Leukocyte cysteine proteinase inhibitor 1.